We begin with the raw amino-acid sequence, 564 residues long: 4-coumarate--CoA ligase 1 (564 aa).

The ATP site is built by serine 209, serine 210, glycine 211, threonine 212, threonine 213, and lysine 217. (E)-4-coumaroyl-AMP contacts are provided by tyrosine 259 and threonine 263. Arginine 280 contributes to the CoA binding site. The segment at 282-351 is SBD1; sequence DLAAMMDLVE…AKLPGAVLGQ (70 aa). (E)-4-coumaroyl-AMP-binding residues include alanine 329, glutamine 351, glycine 352, threonine 356, and methionine 364. ATP is bound by residues glutamine 351, glycine 352, and threonine 356. The segment at 352–419 is SBD2; that stretch reads GYGMTEAGPV…IRGQQIMKGY (68 aa). Residues aspartate 440 and arginine 455 each coordinate ATP. Residues lysine 457 and lysine 461 each contribute to the (E)-4-coumaroyl-AMP site. The CoA site is built by arginine 463 and glycine 464. Residue lysine 547 coordinates ATP.

Belongs to the ATP-dependent AMP-binding enzyme family. Requires Mg(2+) as cofactor. As to expression, expressed in roots, stems, leaf blades and leaf sheaths.

It catalyses the reaction (E)-ferulate + ATP + CoA = (E)-feruloyl-CoA + AMP + diphosphate. It carries out the reaction (E)-4-coumarate + ATP + CoA = (E)-4-coumaroyl-CoA + AMP + diphosphate. The enzyme catalyses (E)-cinnamate + ATP + CoA = (E)-cinnamoyl-CoA + AMP + diphosphate. The catalysed reaction is (E)-caffeate + ATP + CoA = (E)-caffeoyl-CoA + AMP + diphosphate. It catalyses the reaction (E)-ferulate + ATP + H(+) = (E)-feruloyl-AMP + diphosphate. It carries out the reaction (E)-feruloyl-AMP + CoA = (E)-feruloyl-CoA + AMP + H(+). The enzyme catalyses (E)-4-coumarate + ATP + H(+) = (E)-4-coumaroyl-AMP + diphosphate. The catalysed reaction is (E)-4-coumaroyl-AMP + CoA = (E)-4-coumaroyl-CoA + AMP + H(+). It catalyses the reaction (E)-caffeate + ATP + H(+) = (E)-caffeoyl-AMP + diphosphate. It carries out the reaction (E)-caffeoyl-AMP + CoA = (E)-caffeoyl-CoA + AMP + H(+). It functions in the pathway phytoalexin biosynthesis; 3,4',5-trihydroxystilbene biosynthesis; 3,4',5-trihydroxystilbene from trans-4-coumarate: step 1/2. Involved in the phenylpropanoid metabolism by mediating the activation of a number of hydroxycinnamates for the biosynthesis of monolignols and other phenolic secondary metabolites. Catalyzes the formation of CoA esters of cinnamate, 4-coumarate, caffeate and ferulate. Is more efficient with substrates in the following order: ferulate &gt; 4-coumarate &gt; cinnamate &gt; caffeate. Cannot convert sinapate to its corresponding CoA ester. Follows a two-step reaction mechanism, wherein the carboxylate substrate first undergoes adenylation by ATP, followed by a thioesterification in the presence of CoA to yield the final CoA thioester. This Oryza sativa subsp. japonica (Rice) protein is 4-coumarate--CoA ligase 1.